The following is a 165-amino-acid chain: Small ribosomal subunit protein uS5 (165 aa).

In terms of domain architecture, S5 DRBM spans 13–76; that stretch reads LEEKVLVVNR…EAARKNLITI (64 aa).

This sequence belongs to the universal ribosomal protein uS5 family. In terms of assembly, part of the 30S ribosomal subunit. Contacts proteins S4 and S8.

Functionally, with S4 and S12 plays an important role in translational accuracy. In terms of biological role, located at the back of the 30S subunit body where it stabilizes the conformation of the head with respect to the body. The protein is Small ribosomal subunit protein uS5 of Chlamydia caviae (strain ATCC VR-813 / DSM 19441 / 03DC25 / GPIC) (Chlamydophila caviae).